Reading from the N-terminus, the 141-residue chain is Ribonuclease P protein component (141 aa).

Basic and acidic residues predominate over residues 114–134 (RRIKAKGERRGDGKRRTERPE). The disordered stretch occupies residues 114–141 (RRIKAKGERRGDGKRRTERPESGPVNGK).

This sequence belongs to the RnpA family. Consists of a catalytic RNA component (M1 or rnpB) and a protein subunit.

It carries out the reaction Endonucleolytic cleavage of RNA, removing 5'-extranucleotides from tRNA precursor.. RNaseP catalyzes the removal of the 5'-leader sequence from pre-tRNA to produce the mature 5'-terminus. It can also cleave other RNA substrates such as 4.5S RNA. The protein component plays an auxiliary but essential role in vivo by binding to the 5'-leader sequence and broadening the substrate specificity of the ribozyme. The sequence is that of Ribonuclease P protein component from Brucella anthropi (strain ATCC 49188 / DSM 6882 / CCUG 24695 / JCM 21032 / LMG 3331 / NBRC 15819 / NCTC 12168 / Alc 37) (Ochrobactrum anthropi).